Here is a 101-residue protein sequence, read N- to C-terminus: NAD(P)H-quinone oxidoreductase subunit 4L, chloroplastic (101 aa).

Transmembrane regions (helical) follow at residues 2-22 (ILEHVLVLSAYLFSIGIYGLI), 32-52 (MCLELILNSVNLNFVTFSDFF), and 61-81 (IFSIFIIAIAAAEAAIGLAIV).

It belongs to the complex I subunit 4L family. In terms of assembly, NDH is composed of at least 16 different subunits, 5 of which are encoded in the nucleus.

The protein localises to the plastid. The protein resides in the chloroplast thylakoid membrane. The enzyme catalyses a plastoquinone + NADH + (n+1) H(+)(in) = a plastoquinol + NAD(+) + n H(+)(out). It carries out the reaction a plastoquinone + NADPH + (n+1) H(+)(in) = a plastoquinol + NADP(+) + n H(+)(out). Its function is as follows. NDH shuttles electrons from NAD(P)H:plastoquinone, via FMN and iron-sulfur (Fe-S) centers, to quinones in the photosynthetic chain and possibly in a chloroplast respiratory chain. The immediate electron acceptor for the enzyme in this species is believed to be plastoquinone. Couples the redox reaction to proton translocation, and thus conserves the redox energy in a proton gradient. This is NAD(P)H-quinone oxidoreductase subunit 4L, chloroplastic from Oenothera argillicola (Appalachian evening primrose).